A 484-amino-acid chain; its full sequence is ATP-dependent rRNA helicase RRP3 (484 aa).

Residues 1–10 (MAIVGSNSVS) show a composition bias toward polar residues. The segment at 1-61 (MAIVGSNSVS…SSQKSKNIVE (61 aa)) is disordered. Basic and acidic residues predominate over residues 18–54 (RNDARDLAEKIKRNALKKQEQDKKQQLEEESKPESSQ). A Q motif motif is present at residues 71–99 (STFSELKLVPELLEAIQQMKFSKPTPIQS). Residues 102 to 273 (IPHALEGKDI…RASLHNPVRV (172 aa)) form the Helicase ATP-binding domain. 115 to 122 (AQTGSGKT) contacts ATP. Positions 221–224 (DEAD) match the DEAD box motif. The Helicase C-terminal domain occupies 300 to 444 (YLIHLLNEFV…KDPSPPKAML (145 aa)). Positions 460-484 (RQTKEFHEKTRRGRRGKDDKDREEH) are disordered. Residues 475 to 484 (GKDDKDREEH) show a composition bias toward basic and acidic residues.

The protein belongs to the DEAD box helicase family. DDX47/RRP3 subfamily. Interacts with the SSU processome.

It is found in the nucleus. It carries out the reaction ATP + H2O = ADP + phosphate + H(+). In terms of biological role, ATP-dependent rRNA helicase required for pre-ribosomal RNA processing. Involved in the maturation of the 35S-pre-rRNA and to its cleavage to mature 18S rRNA. The polypeptide is ATP-dependent rRNA helicase RRP3 (Scheffersomyces stipitis (strain ATCC 58785 / CBS 6054 / NBRC 10063 / NRRL Y-11545) (Yeast)).